A 256-amino-acid polypeptide reads, in one-letter code: DNA repair protein RecO (256 aa).

This sequence belongs to the RecO family.

Its function is as follows. Involved in DNA repair and RecF pathway recombination. The protein is DNA repair protein RecO of Pelotomaculum thermopropionicum (strain DSM 13744 / JCM 10971 / SI).